Here is a 284-residue protein sequence, read N- to C-terminus: Bifunctional protein FolD (284 aa).

Residues 166 to 168 (GAS) and isoleucine 232 contribute to the NADP(+) site.

This sequence belongs to the tetrahydrofolate dehydrogenase/cyclohydrolase family. As to quaternary structure, homodimer.

The enzyme catalyses (6R)-5,10-methylene-5,6,7,8-tetrahydrofolate + NADP(+) = (6R)-5,10-methenyltetrahydrofolate + NADPH. It carries out the reaction (6R)-5,10-methenyltetrahydrofolate + H2O = (6R)-10-formyltetrahydrofolate + H(+). Its pathway is one-carbon metabolism; tetrahydrofolate interconversion. Catalyzes the oxidation of 5,10-methylenetetrahydrofolate to 5,10-methenyltetrahydrofolate and then the hydrolysis of 5,10-methenyltetrahydrofolate to 10-formyltetrahydrofolate. The protein is Bifunctional protein FolD of Tolumonas auensis (strain DSM 9187 / NBRC 110442 / TA 4).